Consider the following 211-residue polypeptide: Octanoyltransferase (211 aa).

In terms of domain architecture, BPL/LPL catalytic spans 32-207; that stretch reads PCTYDEIWFV…ELSKFLEIFI (176 aa). Residues 71–78, 138–140, and 151–153 each bind substrate; these read RGGQITYH, SLG, and GLA. The active-site Acyl-thioester intermediate is Cys-169.

It belongs to the LipB family.

It localises to the cytoplasm. It catalyses the reaction octanoyl-[ACP] + L-lysyl-[protein] = N(6)-octanoyl-L-lysyl-[protein] + holo-[ACP] + H(+). The protein operates within protein modification; protein lipoylation via endogenous pathway; protein N(6)-(lipoyl)lysine from octanoyl-[acyl-carrier-protein]: step 1/2. Its function is as follows. Catalyzes the transfer of endogenously produced octanoic acid from octanoyl-acyl-carrier-protein onto the lipoyl domains of lipoate-dependent enzymes. Lipoyl-ACP can also act as a substrate although octanoyl-ACP is likely to be the physiological substrate. The chain is Octanoyltransferase from Buchnera aphidicola subsp. Acyrthosiphon pisum (strain APS) (Acyrthosiphon pisum symbiotic bacterium).